Consider the following 899-residue polypeptide: Translation initiation factor IF-2 (899 aa).

Disordered stretches follow at residues 94 to 167 (TFTK…VVVK) and 259 to 309 (FNQE…HGFE). Positions 107–121 (AKARQETEERTRPQE) are enriched in basic and acidic residues. Residues 147–164 (RAAQQKETAKTTSTTTEV) show a composition bias toward low complexity. Residues 399–568 (TRPPVVTIMG…LIQSELMELK (170 aa)) enclose the tr-type G domain. Positions 408–415 (GHVDHGKT) are G1. 408 to 415 (GHVDHGKT) is a GTP binding site. Residues 433 to 437 (GITQH) form a G2 region. Residues 454-457 (DTPG) form a G3 region. GTP contacts are provided by residues 454-458 (DTPGH) and 508-511 (NKMD). Residues 508–511 (NKMD) form a G4 region. Positions 544–546 (SAH) are G5.

It belongs to the TRAFAC class translation factor GTPase superfamily. Classic translation factor GTPase family. IF-2 subfamily.

The protein resides in the cytoplasm. Its function is as follows. One of the essential components for the initiation of protein synthesis. Protects formylmethionyl-tRNA from spontaneous hydrolysis and promotes its binding to the 30S ribosomal subunits. Also involved in the hydrolysis of GTP during the formation of the 70S ribosomal complex. This chain is Translation initiation factor IF-2, found in Acinetobacter baylyi (strain ATCC 33305 / BD413 / ADP1).